The primary structure comprises 976 residues: Synaptonemal complex protein 1 (976 aa).

The short motif at Gly-101–Lys-111 is the Mediates head to head self-assembly of N-terminal ends element. A Nuclear localization signal motif is present at residues Lys-117–Lys-120. Positions Glu-206–Gln-362 are interaction with SYCE3. Coiled coils occupy residues Tyr-211–Lys-316, Leu-391–Val-439, Val-499–Ala-685, and Glu-739–Thr-798. A required for pH-induced assembly of C-terminal ends into antiparallel tetramers region spans residues Glu-676–Glu-770. Residues Leu-679–Val-682 carry the Nuclear localization signal motif. Residues Asn-784–Val-976 are DNA-binding. The short motif at Lys-880 to Lys-883 is the Nuclear localization signal element.

In terms of assembly, structural component of synaptonemal complexes. Homotetramer that consists of an N-terminal four-helical bundle that bifurcates into two elongated C-terminal dimeric coiled coils. This tetrameric building block potentially self-assembles into a supramolecular zipper-like lattice to mediate meiotic chromosome synapsis. Self-assembly is likely initiated by local proton density at chromosome axis, which is predicted to trigger antiparallel back to back assembly of adjacent C-terminal ends into tetrameric structures that anchor to chromosomal DNA. Then the N-terminal ends are predicted to undergo cooperative antiparallel head to head assembly at the midline of synaptonemal complexes central element to form a zipper-like lattice between properly aligned homologous chromosomes. The nascent synapsis generated by SYCP1 is stabilized through interaction with central element proteins SYCE1 and SYCE2. Interacts (via tetrameric core) with SYCE3; the interaction remodels SYCP1 homotetramers to 2:1 heterotrimers with SYCE3. SYCP1/SYCE3 heterotrimers form lattice assemblies as part of the mature synaptonemal complex via both lateral and head-to-head interactions. Forms a complex with EWSR1, PRDM9, SYCP3 and REC8; complex formation is dependent of phosphorylated form of REC8 and requires PRDM9 bound to hotspot DNA; EWSR1 joins PRDM9 with the chromosomal axis through REC8. Interacts with SPO16. In terms of tissue distribution, testis.

It localises to the nucleus. The protein localises to the chromosome. The protein resides in the centromere. In terms of biological role, major component of the transverse filaments of synaptonemal complexes, formed between homologous chromosomes during meiotic prophase. Required for normal assembly of the central element of the synaptonemal complexes. Required for normal centromere pairing during meiosis. Required for normal meiotic chromosome synapsis during oocyte and spermatocyte development and for normal male and female fertility. The polypeptide is Synaptonemal complex protein 1 (Homo sapiens (Human)).